Here is a 187-residue protein sequence, read N- to C-terminus: MKRLWVTGYRSYELGVFSDKDPKLTVIKYALSNYLKSLLEEGKIDWVISGANLGTEQWGLETAISLQNDYSVHTALMTPYLEFSKEWNDSNQMKYQNLTEQVDFTASTSDYPYMRPVQLKNYQNFMLEHTDRALLLYDPEHPGKTKYDYEAIKKYQEKSDYPLDIIDFYDLQEAAEEYEENHRKNFY.

The protein belongs to the UPF0398 family.

This chain is UPF0398 protein LJ_1195, found in Lactobacillus johnsonii (strain CNCM I-12250 / La1 / NCC 533).